The following is a 445-amino-acid chain: Phosphoglucosamine mutase 1 (445 aa).

The active-site Phosphoserine intermediate is S102. Mg(2+)-binding residues include S102, D241, D243, and D245. S102 carries the phosphoserine modification.

It belongs to the phosphohexose mutase family. Mg(2+) serves as cofactor. In terms of processing, activated by phosphorylation.

It catalyses the reaction alpha-D-glucosamine 1-phosphate = D-glucosamine 6-phosphate. In terms of biological role, catalyzes the conversion of glucosamine-6-phosphate to glucosamine-1-phosphate. The protein is Phosphoglucosamine mutase 1 of Shewanella sp. (strain MR-7).